The sequence spans 262 residues: Hydroxyethylthiazole kinase (262 aa).

A substrate-binding site is contributed by Met50. Residues Arg125 and Thr171 each contribute to the ATP site. Gly198 lines the substrate pocket.

This sequence belongs to the Thz kinase family. Mg(2+) is required as a cofactor.

It catalyses the reaction 5-(2-hydroxyethyl)-4-methylthiazole + ATP = 4-methyl-5-(2-phosphooxyethyl)-thiazole + ADP + H(+). It participates in cofactor biosynthesis; thiamine diphosphate biosynthesis; 4-methyl-5-(2-phosphoethyl)-thiazole from 5-(2-hydroxyethyl)-4-methylthiazole: step 1/1. Functionally, catalyzes the phosphorylation of the hydroxyl group of 4-methyl-5-beta-hydroxyethylthiazole (THZ). In Escherichia fergusonii (strain ATCC 35469 / DSM 13698 / CCUG 18766 / IAM 14443 / JCM 21226 / LMG 7866 / NBRC 102419 / NCTC 12128 / CDC 0568-73), this protein is Hydroxyethylthiazole kinase.